The sequence spans 296 residues: Acetyl-coenzyme A carboxylase carboxyl transferase subunit beta (296 aa).

In terms of domain architecture, CoA carboxyltransferase N-terminal spans 25–294 (VWTKCTACEQ…PFVEPELISE (270 aa)). Zn(2+) is bound by residues Cys29, Cys32, Cys48, and Cys51. The segment at 29–51 (CTACEQVLYSEELKRNLYVCPKC) adopts a C4-type zinc-finger fold.

This sequence belongs to the AccD/PCCB family. In terms of assembly, acetyl-CoA carboxylase is a heterohexamer composed of biotin carboxyl carrier protein (AccB), biotin carboxylase (AccC) and two subunits each of ACCase subunit alpha (AccA) and ACCase subunit beta (AccD). Zn(2+) is required as a cofactor.

The protein localises to the cytoplasm. The enzyme catalyses N(6)-carboxybiotinyl-L-lysyl-[protein] + acetyl-CoA = N(6)-biotinyl-L-lysyl-[protein] + malonyl-CoA. The protein operates within lipid metabolism; malonyl-CoA biosynthesis; malonyl-CoA from acetyl-CoA: step 1/1. Its function is as follows. Component of the acetyl coenzyme A carboxylase (ACC) complex. Biotin carboxylase (BC) catalyzes the carboxylation of biotin on its carrier protein (BCCP) and then the CO(2) group is transferred by the transcarboxylase to acetyl-CoA to form malonyl-CoA. This chain is Acetyl-coenzyme A carboxylase carboxyl transferase subunit beta, found in Haemophilus influenzae (strain 86-028NP).